Reading from the N-terminus, the 178-residue chain is N-alpha-acetyltransferase 20 (178 aa).

In terms of domain architecture, N-acetyltransferase spans 2-157 (TSLRPFTCDD…DAYDMRKALS (156 aa)). The tract at residues 159–178 (DTEKKSIVPLPHPVRPEDIE) is disordered.

This sequence belongs to the acetyltransferase family. ARD1 subfamily. As to quaternary structure, component of the N-terminal acetyltransferase B (NatB) complex which is composed of naa20 and naa25.

It is found in the cytoplasm. Its subcellular location is the nucleus. The catalysed reaction is N-terminal L-methionyl-L-asparaginyl-[protein] + acetyl-CoA = N-terminal N(alpha)-acetyl-L-methionyl-L-asparaginyl-[protein] + CoA + H(+). It catalyses the reaction N-terminal L-methionyl-L-glutaminyl-[protein] + acetyl-CoA = N-terminal N(alpha)-acetyl-L-methionyl-L-glutaminyl-[protein] + CoA + H(+). The enzyme catalyses N-terminal L-methionyl-L-aspartyl-[protein] + acetyl-CoA = N-terminal N(alpha)-acetyl-L-methionyl-L-aspartyl-[protein] + CoA + H(+). It carries out the reaction N-terminal L-methionyl-L-glutamyl-[protein] + acetyl-CoA = N-terminal N(alpha)-acetyl-L-methionyl-L-glutamyl-[protein] + CoA + H(+). Functionally, catalytic subunit of the NatB complex which catalyzes acetylation of the N-terminal methionine residues of peptides beginning with Met-Asp, Met-Glu, Met-Asn and Met-Gln. Proteins with cell cycle functions are overrepresented in the pool of NatB substrates. Required for maintaining the structure and function of actomyosin fibers and for proper cellular migration. The polypeptide is N-alpha-acetyltransferase 20 (naa20) (Xenopus tropicalis (Western clawed frog)).